Consider the following 128-residue polypeptide: Large ribosomal subunit protein bL12 (128 aa).

It belongs to the bacterial ribosomal protein bL12 family. As to quaternary structure, homodimer. Part of the ribosomal stalk of the 50S ribosomal subunit. Forms a multimeric L10(L12)X complex, where L10 forms an elongated spine to which 2 to 4 L12 dimers bind in a sequential fashion. Binds GTP-bound translation factors.

Its function is as follows. Forms part of the ribosomal stalk which helps the ribosome interact with GTP-bound translation factors. Is thus essential for accurate translation. This Methylobacillus flagellatus (strain ATCC 51484 / DSM 6875 / VKM B-1610 / KT) protein is Large ribosomal subunit protein bL12.